A 44-amino-acid polypeptide reads, in one-letter code: Mu-conotoxin-like Cal 12.1.2h (44 aa).

4 disulfide bridges follow: Cys3-Cys16, Cys11-Cys28, Cys18-Cys33, and Cys27-Cys38. Trp17 is subject to 6'-bromotryptophan. Pro23 is subject to 4-hydroxyproline. Residues Trp36 and Trp37 each carry the 6'-bromotryptophan modification. Residue Pro39 is modified to 4-hydroxyproline. Trp43 carries the post-translational modification 6'-bromotryptophan.

Expressed by the venom duct.

The protein localises to the secreted. Functionally, mu-conotoxins block voltage-gated sodium channels. This toxin reversibly blocks voltage-gated sodium channel in cephalopods, with no alteration in the voltage dependence of sodium conductance or on the kinetics of inactivation. The sequence is that of Mu-conotoxin-like Cal 12.1.2h from Californiconus californicus (California cone).